We begin with the raw amino-acid sequence, 252 residues long: NAC domain-containing protein 83 (252 aa).

In terms of domain architecture, NAC spans 14-160; sequence LPPGFRFHPT…NWVLCRIFLK (147 aa). Residues 110-166 mediate DNA binding; that stretch reads VGLKKTLVFYKGKPPHGSRTDWIMHEYRLSSSPPSSMGPTQNWVLCRIFLKKRAGNK. Disordered stretches follow at residues 165-194 and 217-252; these read NKNDDDDGDSRNLRHNNNNNSSDQIEIITT and LNLLPSSPSSDHASSGVTTEIFSSSDEETSSCNSFR. 2 stretches are compositionally biased toward low complexity: residues 180-194 and 219-252; these read NNNNNSSDQIEIITT and LLPSSPSSDHASSGVTTEIFSSSDEETSSCNSFR. Residues 213 to 226 are PEST-like; the sequence is RTTDLNLLPSSPSS.

In terms of assembly, interacts with NAC007/VND4, NAC026/VND5 and NAC030/VND7. Interacts with the mungbean yellow mosaic virus (MYMV) AC1 replication-associated protein. As to expression, expressed in xylem and phloem cells in roots and inflorescence stems. Highly expressed in senescent leaves. Expressed in roots, and abscission and dehiscence tissues, such as axils of bracts and abscission zones in cauline leaves and siliques.

The protein resides in the nucleus. In terms of biological role, transcriptional repressor that negatively regulates the expression of genes involved in xylem vessel formation. Represses the transcriptional activation activity of NAC030/VND7, which regulates protoxylem vessel differentiation by promoting immature xylem vessel-specific genes expression. Transcriptional activator that regulates the COLD-REGULATED (COR15A and COR15B) and RESPONSIVE TO DEHYDRATION (LTI78/RD29A and LTI65/RD29B) genes by binding directly to their promoters. Mediates signaling crosstalk between salt stress response and leaf aging process. May play a role in DNA replication of mungbean yellow mosaic virus. In Arabidopsis thaliana (Mouse-ear cress), this protein is NAC domain-containing protein 83.